A 144-amino-acid polypeptide reads, in one-letter code: Large ribosomal subunit protein uL15 (144 aa).

The disordered stretch occupies residues 1-52; the sequence is MYLNTISPMKKSNHSSKRKGRGIGSGKGKTSGRGHKGQRSRSGGKVRRGFEG. Basic residues-rich tracts occupy residues 11–21 and 30–47; these read KSNHSSKRKGR and TSGRGHKGQRSRSGGKVR.

Belongs to the universal ribosomal protein uL15 family. As to quaternary structure, part of the 50S ribosomal subunit.

Functionally, binds to the 23S rRNA. This Wigglesworthia glossinidia brevipalpis protein is Large ribosomal subunit protein uL15.